The chain runs to 141 residues: Large ribosomal subunit protein uL11 (141 aa).

It belongs to the universal ribosomal protein uL11 family. In terms of assembly, part of the ribosomal stalk of the 50S ribosomal subunit. Interacts with L10 and the large rRNA to form the base of the stalk. L10 forms an elongated spine to which L12 dimers bind in a sequential fashion forming a multimeric L10(L12)X complex. In terms of processing, one or more lysine residues are methylated.

Forms part of the ribosomal stalk which helps the ribosome interact with GTP-bound translation factors. This Thermosipho africanus (strain TCF52B) protein is Large ribosomal subunit protein uL11.